The following is a 158-amino-acid chain: Protein-export protein SecB (158 aa).

This sequence belongs to the SecB family. As to quaternary structure, homotetramer, a dimer of dimers. One homotetramer interacts with 1 SecA dimer.

It is found in the cytoplasm. In terms of biological role, one of the proteins required for the normal export of preproteins out of the cell cytoplasm. It is a molecular chaperone that binds to a subset of precursor proteins, maintaining them in a translocation-competent state. It also specifically binds to its receptor SecA. The protein is Protein-export protein SecB of Rhodopseudomonas palustris (strain HaA2).